The sequence spans 1025 residues: Dihydropyrimidine dehydrogenase [NADP(+)] (1025 aa).

A 4Fe-4S ferredoxin-type 1 domain is found at 69 to 100; it reads ERGALREAMRCLKCADAPCQKSCPTNLDIKSF. [4Fe-4S] cluster is bound by residues cysteine 79, cysteine 82, cysteine 87, and cysteine 91. Valine 129 contacts FAD. 4 residues coordinate [4Fe-4S] cluster: cysteine 130, cysteine 136, cysteine 140, and glutamine 156. FAD-binding positions include 194–198, 218–226, arginine 235, and leucine 261; these read GAGPA and EKQEYVGGI. Residues 340–343, 364–365, and arginine 371 each bind NADP(+); these read AGDT and RK. Lysine 384 is subject to N6-acetyllysine. NADP(+)-binding positions include 437–439 and 481–487; these read AFG and DVVGIAN. Position 480-489 (480-489) interacts with FAD; the sequence is GDVVGIANTT. FMN is bound by residues serine 550 and 574–575; that span reads KT. Residues asparagine 609 and 668 to 670 contribute to the substrate site; that span reads NLS. Catalysis depends on cysteine 671, which acts as the Proton acceptor. Lysine 709 contacts FMN. 736 to 737 is a binding site for substrate; it reads NT. Residues glycine 767, 793–795, and 816–817 contribute to the FMN site; these read TGG and CS. 2 4Fe-4S ferredoxin-type domains span residues 944–976 and 978–1007; these read VVAV…FDPE and HLPT…MVSR. [4Fe-4S] cluster is bound by residues cysteine 953, cysteine 956, cysteine 959, cysteine 963, cysteine 986, cysteine 989, cysteine 992, and cysteine 996.

Belongs to the dihydropyrimidine dehydrogenase family. As to quaternary structure, homodimer. FAD serves as cofactor. It depends on FMN as a cofactor. Requires [4Fe-4S] cluster as cofactor.

It localises to the cytoplasm. It carries out the reaction 5,6-dihydrouracil + NADP(+) = uracil + NADPH + H(+). It catalyses the reaction 5,6-dihydrothymine + NADP(+) = thymine + NADPH + H(+). It participates in amino-acid biosynthesis; beta-alanine biosynthesis. Inactivated by 5-iodouracil. Functionally, involved in pyrimidine base degradation. Catalyzes the reduction of uracil and thymine. Also involved the degradation of the chemotherapeutic drug 5-fluorouracil. The sequence is that of Dihydropyrimidine dehydrogenase [NADP(+)] (DPYD) from Bos taurus (Bovine).